Here is a 477-residue protein sequence, read N- to C-terminus: Glycogen synthase (477 aa).

Lys15 is a binding site for ADP-alpha-D-glucose.

Belongs to the glycosyltransferase 1 family. Bacterial/plant glycogen synthase subfamily.

It catalyses the reaction [(1-&gt;4)-alpha-D-glucosyl](n) + ADP-alpha-D-glucose = [(1-&gt;4)-alpha-D-glucosyl](n+1) + ADP + H(+). Its pathway is glycan biosynthesis; glycogen biosynthesis. In terms of biological role, synthesizes alpha-1,4-glucan chains using ADP-glucose. The chain is Glycogen synthase from Klebsiella pneumoniae subsp. pneumoniae (strain ATCC 700721 / MGH 78578).